A 257-amino-acid chain; its full sequence is NAD-capped RNA hydrolase NudC (257 aa).

Arg-69 is a binding site for substrate. Zn(2+)-binding residues include Cys-98 and Cys-101. A substrate-binding site is contributed by Glu-111. Residues Cys-116 and Cys-119 each coordinate Zn(2+). Tyr-124 serves as a coordination point for substrate. One can recognise a Nudix hydrolase domain in the interval 125-248; it reads PQIAPCIIVA…TVARRLIEDT (124 aa). Residues Ala-158, Glu-174, and Glu-178 each contribute to the a divalent metal cation site. The Nudix box signature appears at 159–180; the sequence is GFVEVGETLEQAVAREVMEESG. Position 192-199 (192-199) interacts with substrate; that stretch reads QPWPFPQS. Position 219 (Glu-219) interacts with a divalent metal cation. Ala-241 serves as a coordination point for substrate.

This sequence belongs to the Nudix hydrolase family. NudC subfamily. As to quaternary structure, homodimer. The cofactor is Mg(2+). Mn(2+) is required as a cofactor. Zn(2+) serves as cofactor.

The enzyme catalyses a 5'-end NAD(+)-phospho-ribonucleoside in mRNA + H2O = a 5'-end phospho-adenosine-phospho-ribonucleoside in mRNA + beta-nicotinamide D-ribonucleotide + 2 H(+). It catalyses the reaction NAD(+) + H2O = beta-nicotinamide D-ribonucleotide + AMP + 2 H(+). It carries out the reaction NADH + H2O = reduced beta-nicotinamide D-ribonucleotide + AMP + 2 H(+). Its function is as follows. mRNA decapping enzyme that specifically removes the nicotinamide adenine dinucleotide (NAD) cap from a subset of mRNAs by hydrolyzing the diphosphate linkage to produce nicotinamide mononucleotide (NMN) and 5' monophosphate mRNA. The NAD-cap is present at the 5'-end of some mRNAs and stabilizes RNA against 5'-processing. Has preference for mRNAs with a 5'-end purine. Catalyzes the hydrolysis of a broad range of dinucleotide pyrophosphates. In Salmonella heidelberg (strain SL476), this protein is NAD-capped RNA hydrolase NudC.